Reading from the N-terminus, the 943-residue chain is Isoleucine--tRNA ligase (943 aa).

Residues 58-68 carry the 'HIGH' region motif; it reads PYANGSIHIGH. Glu567 lines the L-isoleucyl-5'-AMP pocket. The 'KMSKS' region motif lies at 608-612; sequence KMSKS. Lys611 is an ATP binding site. Zn(2+)-binding residues include Cys906, Cys909, Cys926, and Cys929.

Belongs to the class-I aminoacyl-tRNA synthetase family. IleS type 1 subfamily. As to quaternary structure, monomer. The cofactor is Zn(2+).

The protein localises to the cytoplasm. The catalysed reaction is tRNA(Ile) + L-isoleucine + ATP = L-isoleucyl-tRNA(Ile) + AMP + diphosphate. Catalyzes the attachment of isoleucine to tRNA(Ile). As IleRS can inadvertently accommodate and process structurally similar amino acids such as valine, to avoid such errors it has two additional distinct tRNA(Ile)-dependent editing activities. One activity is designated as 'pretransfer' editing and involves the hydrolysis of activated Val-AMP. The other activity is designated 'posttransfer' editing and involves deacylation of mischarged Val-tRNA(Ile). The polypeptide is Isoleucine--tRNA ligase (Ectopseudomonas mendocina (strain ymp) (Pseudomonas mendocina)).